The primary structure comprises 356 residues: PEP-dependent dihydroxyacetone kinase, dihydroxyacetone-binding subunit DhaK (356 aa).

The DhaK domain maps to 7-352 (DVQDVLDEQL…WDAPVHTPAL (346 aa)). Residues 53–56 (GSGH), K104, and D109 contribute to the dihydroxyacetone site. The active-site Proton acceptor is H56. H218 functions as the Tele-hemiaminal-histidine intermediate in the catalytic mechanism.

Homodimer. The dihydroxyacetone kinase complex is composed of a homodimer of DhaM, a homodimer of DhaK and the subunit DhaL. DhaL also forms a complex with DhaR.

The enzyme catalyses dihydroxyacetone + phosphoenolpyruvate = dihydroxyacetone phosphate + pyruvate. The protein operates within polyol metabolism; glycerol degradation. Inhibited by chloro-3-hydroxyacetone and D,L-glyceraldehyde. Dihydroxyacetone binding subunit of the dihydroxyacetone kinase, which is responsible for the phosphoenolpyruvate (PEP)-dependent phosphorylation of dihydroxyacetone via a phosphoryl group transfer from DhaL-ATP. Binds covalently dihydroxyacetone in hemiaminal linkage. DhaK also acts as corepressor of the transcription activator DhaR by binding to the sensor domain of DhaR. In the presence of dihydroxyacetone, DhaL-ADP displaces DhaK and stimulates DhaR activity. In the absence of dihydroxyacetone, DhaL-ADP is converted by the PTS to DhaL-ATP, which does not bind to DhaR. This chain is PEP-dependent dihydroxyacetone kinase, dihydroxyacetone-binding subunit DhaK, found in Escherichia coli (strain K12).